A 293-amino-acid polypeptide reads, in one-letter code: Pyridoxal 5'-phosphate synthase subunit PdxS (293 aa).

Asp25 provides a ligand contact to D-ribose 5-phosphate. Lys82 functions as the Schiff-base intermediate with D-ribose 5-phosphate in the catalytic mechanism. Residue Gly154 coordinates D-ribose 5-phosphate. Arg166 contributes to the D-glyceraldehyde 3-phosphate binding site. Residues Gly215 and 236 to 237 contribute to the D-ribose 5-phosphate site; that span reads GS.

Belongs to the PdxS/SNZ family. As to quaternary structure, in the presence of PdxT, forms a dodecamer of heterodimers.

The enzyme catalyses aldehydo-D-ribose 5-phosphate + D-glyceraldehyde 3-phosphate + L-glutamine = pyridoxal 5'-phosphate + L-glutamate + phosphate + 3 H2O + H(+). It participates in cofactor biosynthesis; pyridoxal 5'-phosphate biosynthesis. In terms of biological role, catalyzes the formation of pyridoxal 5'-phosphate from ribose 5-phosphate (RBP), glyceraldehyde 3-phosphate (G3P) and ammonia. The ammonia is provided by the PdxT subunit. Can also use ribulose 5-phosphate and dihydroxyacetone phosphate as substrates, resulting from enzyme-catalyzed isomerization of RBP and G3P, respectively. In Thermotoga petrophila (strain ATCC BAA-488 / DSM 13995 / JCM 10881 / RKU-1), this protein is Pyridoxal 5'-phosphate synthase subunit PdxS.